The following is a 445-amino-acid chain: Putative serpin-Z5 (445 aa).

Positions 356 to 380 (GTEAAASAINMVCGMSMTPEPRPVP) are RCL.

Belongs to the serpin family.

In terms of biological role, probable serine protease inhibitor. The sequence is that of Putative serpin-Z5 from Oryza sativa subsp. japonica (Rice).